Here is a 194-residue protein sequence, read N- to C-terminus: MFIPYVIEKSSRGERSYDIYSRLLKDRIIMLSGEIHDELAASIVAQLLFLEAEDPTKDIYLYINSPGGVITSGFSIYDTMNYIKPDVCTICIGQAASMGAFLLSCGAEGKRFALPNSRIMIHQPLGGARGQATDIEIQAKEILRLKTILNDILAKNTKQKVAKIAKDTERDFFMSAQEAKEYGLIDKVLEKSFK.

Ser97 serves as the catalytic Nucleophile. His122 is an active-site residue.

The protein belongs to the peptidase S14 family. As to quaternary structure, fourteen ClpP subunits assemble into 2 heptameric rings which stack back to back to give a disk-like structure with a central cavity, resembling the structure of eukaryotic proteasomes.

The protein resides in the cytoplasm. The catalysed reaction is Hydrolysis of proteins to small peptides in the presence of ATP and magnesium. alpha-casein is the usual test substrate. In the absence of ATP, only oligopeptides shorter than five residues are hydrolyzed (such as succinyl-Leu-Tyr-|-NHMec, and Leu-Tyr-Leu-|-Tyr-Trp, in which cleavage of the -Tyr-|-Leu- and -Tyr-|-Trp bonds also occurs).. Functionally, cleaves peptides in various proteins in a process that requires ATP hydrolysis. Has a chymotrypsin-like activity. Plays a major role in the degradation of misfolded proteins. In Campylobacter jejuni subsp. jejuni serotype O:6 (strain 81116 / NCTC 11828), this protein is ATP-dependent Clp protease proteolytic subunit.